Consider the following 291-residue polypeptide: 4-hydroxy-tetrahydrodipicolinate synthase (291 aa).

Threonine 45 serves as a coordination point for pyruvate. Tyrosine 131 serves as the catalytic Proton donor/acceptor. The active-site Schiff-base intermediate with substrate is lysine 159. Pyruvate is bound at residue isoleucine 202.

It belongs to the DapA family. As to quaternary structure, homotetramer; dimer of dimers.

It localises to the cytoplasm. It carries out the reaction L-aspartate 4-semialdehyde + pyruvate = (2S,4S)-4-hydroxy-2,3,4,5-tetrahydrodipicolinate + H2O + H(+). It functions in the pathway amino-acid biosynthesis; L-lysine biosynthesis via DAP pathway; (S)-tetrahydrodipicolinate from L-aspartate: step 3/4. In terms of biological role, catalyzes the condensation of (S)-aspartate-beta-semialdehyde [(S)-ASA] and pyruvate to 4-hydroxy-tetrahydrodipicolinate (HTPA). The protein is 4-hydroxy-tetrahydrodipicolinate synthase of Methanosarcina barkeri (strain Fusaro / DSM 804).